We begin with the raw amino-acid sequence, 124 residues long: Holo-[acyl-carrier-protein] synthase (124 aa).

Asp-7 and Glu-55 together coordinate Mg(2+).

The protein belongs to the P-Pant transferase superfamily. AcpS family. Mg(2+) serves as cofactor.

Its subcellular location is the cytoplasm. The enzyme catalyses apo-[ACP] + CoA = holo-[ACP] + adenosine 3',5'-bisphosphate + H(+). In terms of biological role, transfers the 4'-phosphopantetheine moiety from coenzyme A to a Ser of acyl-carrier-protein. This chain is Holo-[acyl-carrier-protein] synthase, found in Borreliella burgdorferi (strain ATCC 35210 / DSM 4680 / CIP 102532 / B31) (Borrelia burgdorferi).